The following is an 867-amino-acid chain: FO synthase (867 aa).

Positions 1–22 are disordered; that stretch reads MTTSATSGTGPADPAGPTENSM. 2 consecutive Radical SAM core domains span residues 75 to 325 and 534 to 769; these read ITYS…LQAP and VTYI…LLHP. A cofG-like region spans residues 76–407; it reads TYSKSVFVPL…PRLRPHVAAL (332 aa). [4Fe-4S] cluster contacts are provided by Cys-89, Cys-93, Cys-96, Cys-548, Cys-552, and Cys-555. The segment at 511 to 844 is cofH-like; sequence EGPALDALCG…KPRTTLYGPV (334 aa). Residues 835–867 are disordered; the sequence is KPRTTLYGPVPEERQRAARDSDGHLPELLPVLD. Positions 845 to 859 are enriched in basic and acidic residues; that stretch reads PEERQRAARDSDGHL.

The protein in the N-terminal section; belongs to the radical SAM superfamily. CofG family. It in the C-terminal section; belongs to the radical SAM superfamily. CofH family. [4Fe-4S] cluster is required as a cofactor.

It catalyses the reaction 5-amino-6-(D-ribitylamino)uracil + L-tyrosine + S-adenosyl-L-methionine = 5-amino-5-(4-hydroxybenzyl)-6-(D-ribitylimino)-5,6-dihydrouracil + 2-iminoacetate + 5'-deoxyadenosine + L-methionine + H(+). The catalysed reaction is 5-amino-5-(4-hydroxybenzyl)-6-(D-ribitylimino)-5,6-dihydrouracil + S-adenosyl-L-methionine = 7,8-didemethyl-8-hydroxy-5-deazariboflavin + 5'-deoxyadenosine + L-methionine + NH4(+) + H(+). It participates in cofactor biosynthesis; coenzyme F0 biosynthesis. Functionally, catalyzes the radical-mediated synthesis of 7,8-didemethyl-8-hydroxy-5-deazariboflavin (FO) from 5-amino-6-(D-ribitylamino)uracil and L-tyrosine. In Streptomyces coelicolor (strain ATCC BAA-471 / A3(2) / M145), this protein is FO synthase (fbiC).